The primary structure comprises 523 residues: 2-isopropylmalate synthase (523 aa).

The 263-residue stretch at valine 5–histidine 267 folds into the Pyruvate carboxyltransferase domain. Aspartate 14, histidine 202, histidine 204, and asparagine 238 together coordinate Mn(2+). The segment at glutamine 392 to valine 523 is regulatory domain.

It belongs to the alpha-IPM synthase/homocitrate synthase family. LeuA type 1 subfamily. As to quaternary structure, homodimer. Mn(2+) is required as a cofactor.

It is found in the cytoplasm. It carries out the reaction 3-methyl-2-oxobutanoate + acetyl-CoA + H2O = (2S)-2-isopropylmalate + CoA + H(+). Its pathway is amino-acid biosynthesis; L-leucine biosynthesis; L-leucine from 3-methyl-2-oxobutanoate: step 1/4. Its function is as follows. Catalyzes the condensation of the acetyl group of acetyl-CoA with 3-methyl-2-oxobutanoate (2-ketoisovalerate) to form 3-carboxy-3-hydroxy-4-methylpentanoate (2-isopropylmalate). This chain is 2-isopropylmalate synthase, found in Shewanella woodyi (strain ATCC 51908 / MS32).